The following is a 619-amino-acid chain: Probable galacturonosyltransferase 7 (619 aa).

The Cytoplasmic segment spans residues 1–19 (MKGGGGGGGGGGGGKRRWK). The helical; Signal-anchor for type II membrane protein transmembrane segment at 20-40 (VLVIGVLVLVILSMLVPLAFL) threads the bilayer. The Lumenal portion of the chain corresponds to 41–619 (LGLHNGFHSP…RFLSDCNVNP (579 aa)). Asn-68, Asn-106, Asn-132, Asn-343, and Asn-421 each carry an N-linked (GlcNAc...) asparagine glycan. The segment at 95–139 (KSDINVGSRDVNATSGTDSKKRGLPVSPTVVANPSPANKTKSEAS) is disordered. Over residues 124–139 (VVANPSPANKTKSEAS) the composition is skewed to polar residues.

The protein belongs to the glycosyltransferase 8 family. Expressed in roots, inflorescences, flowers, siliques, leaves and stems.

The protein resides in the golgi apparatus membrane. The protein operates within glycan metabolism; pectin biosynthesis. Functionally, may be involved in pectin biosynthesis. The sequence is that of Probable galacturonosyltransferase 7 (GAUT7) from Arabidopsis thaliana (Mouse-ear cress).